A 272-amino-acid polypeptide reads, in one-letter code: Insulin-like growth factor-binding protein 1 (272 aa).

The first 25 residues, 1–25 (MPEVPAAGLWPFLLLLAVQVSTVAS), serve as a signal peptide directing secretion. The region spanning 28 to 109 (QPWHCAPCSA…TRGQGACVPE (82 aa)) is the IGFBP N-terminal domain. Intrachain disulfides connect C32–C59, C35–C61, C43–C62, C50–C65, and C73–C86. 3 positions are modified to phosphoserine: S139, S157, and S169. Residue T170 is modified to Phosphothreonine. A Phosphotyrosine modification is found at Y171. The Thyroglobulin type-1 domain maps to 186 to 264 (KQPCRRELYK…SLEIRGDPNC (79 aa)). 3 disulfide bridges follow: C189–C219, C230–C241, and C243–C264. Phosphoserine is present on S255. Positions 259-261 (RGD) match the Cell attachment site motif.

In terms of assembly, binds equally well IGF1 and IGF2. Interacts with integrin ITGA5:ITGB1. Interacts with VHL; this interaction inhibits HIF1A degradation.

The protein localises to the secreted. In terms of biological role, multifunctional protein that plays a critical role in regulating the availability of IGFs such as IGF1 and IGF2 to their receptors and thereby regulates IGF-mediated cellular processes including cell migration, proliferation, differentiation or apoptosis in a cell-type specific manner. Also plays a positive role in cell migration by interacting with integrin ITGA5:ITGB1 through its RGD motif. Mechanistically, binding to integrins leads to activation of focal adhesion kinase/PTK2 and stimulation of the mitogen-activated protein kinase (MAPK) pathway. Regulates cardiomyocyte apoptosis by suppressing HIF-1alpha/HIF1A degradation through ubiquitination. This Ictidomys tridecemlineatus (Thirteen-lined ground squirrel) protein is Insulin-like growth factor-binding protein 1 (IGFBP1).